The chain runs to 240 residues: Small ribosomal subunit protein eS4 (240 aa).

Residues 37 to 99 (VPLVVLLRDV…RGEFFRVFPD (63 aa)) form the S4 RNA-binding domain.

The protein belongs to the eukaryotic ribosomal protein eS4 family.

This Halorubrum lacusprofundi (strain ATCC 49239 / DSM 5036 / JCM 8891 / ACAM 34) protein is Small ribosomal subunit protein eS4.